Reading from the N-terminus, the 213-residue chain is Thiopurine S-methyltransferase (213 aa).

4 residues coordinate S-adenosyl-L-methionine: tryptophan 10, methionine 45, glutamate 66, and arginine 120.

The protein belongs to the class I-like SAM-binding methyltransferase superfamily. TPMT family.

The protein resides in the cytoplasm. It carries out the reaction S-adenosyl-L-methionine + a thiopurine = S-adenosyl-L-homocysteine + a thiopurine S-methylether.. This chain is Thiopurine S-methyltransferase, found in Photobacterium profundum (strain SS9).